The chain runs to 721 residues: Polyribonucleotide nucleotidyltransferase (721 aa).

Mg(2+)-binding residues include aspartate 487 and aspartate 493. Residues proline 554–isoleucine 613 enclose the KH domain. Residues asparagine 623–lysine 691 form the S1 motif domain. The tract at residues threonine 697 to glutamate 721 is disordered. The span at leucine 701–alanine 714 shows a compositional bias: basic and acidic residues.

Belongs to the polyribonucleotide nucleotidyltransferase family. Mg(2+) is required as a cofactor.

It localises to the cytoplasm. It carries out the reaction RNA(n+1) + phosphate = RNA(n) + a ribonucleoside 5'-diphosphate. Functionally, involved in mRNA degradation. Catalyzes the phosphorolysis of single-stranded polyribonucleotides processively in the 3'- to 5'-direction. The chain is Polyribonucleotide nucleotidyltransferase from Rhodopseudomonas palustris (strain BisA53).